The sequence spans 552 residues: DUF724 domain-containing protein 10 (552 aa).

The segment at 308–361 is disordered; the sequence is SSLTQGSGDKTEVETQRKTFPKKTLPRNQNGSGNDSTLENENSNRKRKREENLC. Over residues 333–348 the composition is skewed to polar residues; the sequence is PRNQNGSGNDSTLENE. The DUF724 domain occupies 371–543; the sequence is ILFEKKLPVW…LEFQATASAP (173 aa).

As to expression, expressed at low levels in leaves, stems, flowers and siliques.

Functionally, may be involved in the polar growth of plant cells via transportation of RNAs. The sequence is that of DUF724 domain-containing protein 10 from Arabidopsis thaliana (Mouse-ear cress).